Consider the following 196-residue polypeptide: dTTP/UTP pyrophosphatase (196 aa).

Asp72 functions as the Proton acceptor in the catalytic mechanism.

Belongs to the Maf family. YhdE subfamily. It depends on a divalent metal cation as a cofactor.

It localises to the cytoplasm. It catalyses the reaction dTTP + H2O = dTMP + diphosphate + H(+). It carries out the reaction UTP + H2O = UMP + diphosphate + H(+). In terms of biological role, nucleoside triphosphate pyrophosphatase that hydrolyzes dTTP and UTP. May have a dual role in cell division arrest and in preventing the incorporation of modified nucleotides into cellular nucleic acids. This chain is dTTP/UTP pyrophosphatase, found in Chlamydia felis (strain Fe/C-56) (Chlamydophila felis).